A 257-amino-acid polypeptide reads, in one-letter code: Putative hydro-lyase Bphy_2364 (257 aa).

It belongs to the D-glutamate cyclase family.

The polypeptide is Putative hydro-lyase Bphy_2364 (Paraburkholderia phymatum (strain DSM 17167 / CIP 108236 / LMG 21445 / STM815) (Burkholderia phymatum)).